The primary structure comprises 243 residues: Protein Thf1 (243 aa).

The stretch at 180–224 (SKARVEKDLNLYKSNLEKMAQAVELTEQILESERRKREQNESAKL) forms a coiled coil. Positions 210–220 (ESERRKREQNE) are enriched in basic and acidic residues. The segment at 210–243 (ESERRKREQNESAKLNTGSSEQMSQGVEACSNIS) is disordered. Residues 221-243 (SAKLNTGSSEQMSQGVEACSNIS) show a composition bias toward polar residues.

It belongs to the THF1 family.

Functionally, may be involved in photosynthetic membrane biogenesis. In Prochlorococcus marinus (strain MIT 9313), this protein is Protein Thf1.